A 413-amino-acid chain; its full sequence is Tyrosine--tRNA ligase (413 aa).

Tyrosine 34 lines the L-tyrosine pocket. The 'HIGH' region motif lies at 39-48 (PTSHSLTVGH). L-tyrosine is bound by residues tyrosine 164 and glutamine 168. The 'KMSKS' region signature appears at 225-229 (KFGKS). Lysine 228 contributes to the ATP binding site. In terms of domain architecture, S4 RNA-binding spans 347–413 (ILLVDALVQT…GKKNNALIVF (67 aa)).

The protein belongs to the class-I aminoacyl-tRNA synthetase family. TyrS type 1 subfamily. As to quaternary structure, homodimer.

The protein resides in the cytoplasm. It catalyses the reaction tRNA(Tyr) + L-tyrosine + ATP = L-tyrosyl-tRNA(Tyr) + AMP + diphosphate + H(+). Functionally, catalyzes the attachment of tyrosine to tRNA(Tyr) in a two-step reaction: tyrosine is first activated by ATP to form Tyr-AMP and then transferred to the acceptor end of tRNA(Tyr). The sequence is that of Tyrosine--tRNA ligase from Onion yellows phytoplasma (strain OY-M).